The chain runs to 98 residues: Ribonuclease P protein component 4 (98 aa).

Positions 62, 65, 85, and 88 each coordinate Zn(2+).

It belongs to the eukaryotic/archaeal RNase P protein component 4 family. As to quaternary structure, consists of a catalytic RNA component and at least 4-5 protein subunits. Requires Zn(2+) as cofactor.

It is found in the cytoplasm. The enzyme catalyses Endonucleolytic cleavage of RNA, removing 5'-extranucleotides from tRNA precursor.. Functionally, part of ribonuclease P, a protein complex that generates mature tRNA molecules by cleaving their 5'-ends. This chain is Ribonuclease P protein component 4, found in Thermoplasma volcanium (strain ATCC 51530 / DSM 4299 / JCM 9571 / NBRC 15438 / GSS1).